The following is a 105-amino-acid chain: Small cysteine and glycine repeat-containing protein 6 (105 aa).

The 13 X 2 AA repeats of CG stretch occupies residues 4–83 (CGCGGCGGGC…HSCGCGCGCG (80 aa)).

Belongs to the KRTAP type 28 family.

Its function is as follows. In the hair cortex, hair keratin intermediate filaments are embedded in an interfilamentous matrix, consisting of hair keratin-associated proteins (KRTAP), which are essential for the formation of a rigid and resistant hair shaft through their extensive disulfide bond cross-linking with abundant cysteine residues of hair keratins. The matrix proteins include the high-sulfur and high-glycine-tyrosine keratins. This is Small cysteine and glycine repeat-containing protein 6 from Homo sapiens (Human).